We begin with the raw amino-acid sequence, 456 residues long: UDP-N-acetylglucosamine 1-carboxyvinyltransferase (456 aa).

34 to 35 (KN) is a binding site for phosphoenolpyruvate. R104 is a UDP-N-acetyl-alpha-D-glucosamine binding site. The Proton donor role is filled by C128. At C128 the chain carries 2-(S-cysteinyl)pyruvic acid O-phosphothioketal. Residues D319 and I341 each contribute to the UDP-N-acetyl-alpha-D-glucosamine site.

The protein belongs to the EPSP synthase family. MurA subfamily.

It is found in the cytoplasm. The catalysed reaction is phosphoenolpyruvate + UDP-N-acetyl-alpha-D-glucosamine = UDP-N-acetyl-3-O-(1-carboxyvinyl)-alpha-D-glucosamine + phosphate. The protein operates within cell wall biogenesis; peptidoglycan biosynthesis. Cell wall formation. Adds enolpyruvyl to UDP-N-acetylglucosamine. This Prochlorococcus marinus (strain MIT 9301) protein is UDP-N-acetylglucosamine 1-carboxyvinyltransferase.